The sequence spans 363 residues: Small ribosomal subunit biogenesis GTPase RsgA (363 aa).

One can recognise a CP-type G domain in the interval 112-268 (HQQVIAANID…LIDTPGMREL (157 aa)). GTP contacts are provided by residues 157 to 160 (TKAD) and 210 to 218 (GSSGAGKST). C291, C296, H298, and C304 together coordinate Zn(2+). The segment at 340 to 363 (RVAQNNRGKGSGKRPASIDRPGRR) is disordered.

Belongs to the TRAFAC class YlqF/YawG GTPase family. RsgA subfamily. As to quaternary structure, monomer. Associates with 30S ribosomal subunit, binds 16S rRNA. Requires Zn(2+) as cofactor.

It is found in the cytoplasm. In terms of biological role, one of several proteins that assist in the late maturation steps of the functional core of the 30S ribosomal subunit. Helps release RbfA from mature subunits. May play a role in the assembly of ribosomal proteins into the subunit. Circularly permuted GTPase that catalyzes slow GTP hydrolysis, GTPase activity is stimulated by the 30S ribosomal subunit. The protein is Small ribosomal subunit biogenesis GTPase RsgA of Xanthomonas oryzae pv. oryzae (strain MAFF 311018).